Reading from the N-terminus, the 353-residue chain is Protein RecA (353 aa).

ATP is bound at residue 73-80 (GPESSGKT).

This sequence belongs to the RecA family.

The protein resides in the cytoplasm. In terms of biological role, can catalyze the hydrolysis of ATP in the presence of single-stranded DNA, the ATP-dependent uptake of single-stranded DNA by duplex DNA, and the ATP-dependent hybridization of homologous single-stranded DNAs. It interacts with LexA causing its activation and leading to its autocatalytic cleavage. This is Protein RecA from Bordetella avium (strain 197N).